Consider the following 305-residue polypeptide: UDP-3-O-acyl-N-acetylglucosamine deacetylase (305 aa).

3 residues coordinate Zn(2+): His-78, His-237, and Asp-241. His-264 serves as the catalytic Proton donor.

The protein belongs to the LpxC family. It depends on Zn(2+) as a cofactor.

It catalyses the reaction a UDP-3-O-[(3R)-3-hydroxyacyl]-N-acetyl-alpha-D-glucosamine + H2O = a UDP-3-O-[(3R)-3-hydroxyacyl]-alpha-D-glucosamine + acetate. Its pathway is glycolipid biosynthesis; lipid IV(A) biosynthesis; lipid IV(A) from (3R)-3-hydroxytetradecanoyl-[acyl-carrier-protein] and UDP-N-acetyl-alpha-D-glucosamine: step 2/6. Catalyzes the hydrolysis of UDP-3-O-myristoyl-N-acetylglucosamine to form UDP-3-O-myristoylglucosamine and acetate, the committed step in lipid A biosynthesis. The protein is UDP-3-O-acyl-N-acetylglucosamine deacetylase of Burkholderia thailandensis (strain ATCC 700388 / DSM 13276 / CCUG 48851 / CIP 106301 / E264).